A 233-amino-acid polypeptide reads, in one-letter code: MPTSKKLKEALAKVDRSKSYTLKDGIELVKNTAFAKFTETVDVAVRLGVDPRHADQMVRGAVVLPNGLGKDVRVLVFAKGEKEKEARDAGADFVGADDLVAKIQEGWFDFDTAIATPDMMGVVGKIGKLLGPRGLMPNPKVGTVTFDVGRAVNESKSGKVEFRVEKAGIIHAPVGKVSFDADKLKENILALVDALVKSKPSAAKGTYIKKISVSSTMGPGVNLDVSDVSSQVV.

It belongs to the universal ribosomal protein uL1 family. As to quaternary structure, part of the 50S ribosomal subunit.

Binds directly to 23S rRNA. The L1 stalk is quite mobile in the ribosome, and is involved in E site tRNA release. Its function is as follows. Protein L1 is also a translational repressor protein, it controls the translation of the L11 operon by binding to its mRNA. This Geotalea uraniireducens (strain Rf4) (Geobacter uraniireducens) protein is Large ribosomal subunit protein uL1.